A 258-amino-acid polypeptide reads, in one-letter code: Shikimate dehydrogenase (NADP(+)) (258 aa).

Shikimate-binding positions include 14 to 16 (SES) and Thr61. Lys65 functions as the Proton acceptor in the catalytic mechanism. Shikimate contacts are provided by Asn86 and Asp101. Residues 125–129 (GSGGS) and Leu211 each bind NADP(+). Tyr213 is a binding site for shikimate. Gly234 serves as a coordination point for NADP(+).

Belongs to the shikimate dehydrogenase family. As to quaternary structure, homodimer.

The catalysed reaction is shikimate + NADP(+) = 3-dehydroshikimate + NADPH + H(+). It functions in the pathway metabolic intermediate biosynthesis; chorismate biosynthesis; chorismate from D-erythrose 4-phosphate and phosphoenolpyruvate: step 4/7. Its function is as follows. Involved in the biosynthesis of the chorismate, which leads to the biosynthesis of aromatic amino acids. Catalyzes the reversible NADPH linked reduction of 3-dehydroshikimate (DHSA) to yield shikimate (SA). This is Shikimate dehydrogenase (NADP(+)) from Clostridium botulinum (strain 657 / Type Ba4).